The chain runs to 335 residues: Methionine import ATP-binding protein MetN (335 aa).

One can recognise an ABC transporter domain in the interval 2 to 241 (IEFQRLHKSY…PKHVTTRRFV (240 aa)). ATP is bound at residue 38–45 (GHSGAGKS).

This sequence belongs to the ABC transporter superfamily. Methionine importer (TC 3.A.1.24) family. The complex is composed of two ATP-binding proteins (MetN), two transmembrane proteins (MetI) and a solute-binding protein (MetQ).

The protein localises to the cell inner membrane. It carries out the reaction L-methionine(out) + ATP + H2O = L-methionine(in) + ADP + phosphate + H(+). The catalysed reaction is D-methionine(out) + ATP + H2O = D-methionine(in) + ADP + phosphate + H(+). Its function is as follows. Part of the ABC transporter complex MetNIQ involved in methionine import. Responsible for energy coupling to the transport system. The polypeptide is Methionine import ATP-binding protein MetN (Xanthomonas oryzae pv. oryzae (strain MAFF 311018)).